The sequence spans 119 residues: V-type proton ATPase subunit F (119 aa).

It belongs to the V-ATPase F subunit family. As to quaternary structure, V-ATPase is a heteromultimeric enzyme composed of a peripheral catalytic V1 complex (components A to H) attached to an integral membrane V0 proton pore complex (components: a, c, c', c'', d, e, f and VOA1).

It localises to the vacuole membrane. In terms of biological role, subunit of the V1 complex of vacuolar(H+)-ATPase (V-ATPase), a multisubunit enzyme composed of a peripheral complex (V1) that hydrolyzes ATP and a membrane integral complex (V0) that translocates protons. V-ATPase is responsible for acidifying and maintaining the pH of intracellular compartments. This Vanderwaltozyma polyspora (strain ATCC 22028 / DSM 70294 / BCRC 21397 / CBS 2163 / NBRC 10782 / NRRL Y-8283 / UCD 57-17) (Kluyveromyces polysporus) protein is V-type proton ATPase subunit F (VMA7).